Here is a 539-residue protein sequence, read N- to C-terminus: Chaperonin GroEL 2 (539 aa).

Residues 30 to 33 (TLGP), K51, 87 to 91 (DGTTT), G415, 480 to 482 (NAA), and D496 contribute to the ATP site.

The protein belongs to the chaperonin (HSP60) family. In terms of assembly, forms a cylinder of 14 subunits composed of two heptameric rings stacked back-to-back. Interacts with the co-chaperonin GroES.

The protein localises to the cytoplasm. It carries out the reaction ATP + H2O + a folded polypeptide = ADP + phosphate + an unfolded polypeptide.. In terms of biological role, together with its co-chaperonin GroES, plays an essential role in assisting protein folding. The GroEL-GroES system forms a nano-cage that allows encapsulation of the non-native substrate proteins and provides a physical environment optimized to promote and accelerate protein folding. The sequence is that of Chaperonin GroEL 2 from Sphingopyxis alaskensis (strain DSM 13593 / LMG 18877 / RB2256) (Sphingomonas alaskensis).